A 308-amino-acid chain; its full sequence is Probable GTP 3',8-cyclase (308 aa).

Residues 4-224 (RFGRPLEDLR…QIRKKHFRPR (221 aa)) form the Radical SAM core domain. Residue Arg13 participates in GTP binding. Residues Cys20, Cys24, and Cys27 each coordinate [4Fe-4S] cluster. Lys60 provides a ligand contact to GTP. Gly64 serves as a coordination point for S-adenosyl-L-methionine. Thr90 contributes to the GTP binding site. Ser114 contacts S-adenosyl-L-methionine. Lys151 serves as a coordination point for GTP. [4Fe-4S] cluster-binding residues include Cys245 and Cys248. 250–252 (RIR) contacts GTP. Cys262 lines the [4Fe-4S] cluster pocket.

The protein belongs to the radical SAM superfamily. MoaA family. [4Fe-4S] cluster serves as cofactor.

It catalyses the reaction GTP + AH2 + S-adenosyl-L-methionine = (8S)-3',8-cyclo-7,8-dihydroguanosine 5'-triphosphate + 5'-deoxyadenosine + L-methionine + A + H(+). Its pathway is cofactor biosynthesis; molybdopterin biosynthesis. Catalyzes the cyclization of GTP to (8S)-3',8-cyclo-7,8-dihydroguanosine 5'-triphosphate. The protein is Probable GTP 3',8-cyclase of Saccharolobus islandicus (strain M.16.27) (Sulfolobus islandicus).